Consider the following 496-residue polypeptide: Matrilin-1 (496 aa).

The N-terminal stretch at M1–C22 is a signal peptide. The region spanning S23–V222 is the VWFA 1 domain. N-linked (GlcNAc...) asparagine glycosylation occurs at N76. An EGF-like domain is found at V223–N263. 3 disulfide bridges follow: C227-C238, C234-C247, and C249-C262. Residues V264–V453 enclose the VWFA 2 domain. N344 carries N-linked (GalNAc...) asparagine glycosylation. A coiled-coil region spans residues Q467–V495.

As to quaternary structure, homotrimer. Part of a complex composed of MATN1 (via VWFA1 domain), type 2 collagens and type 6 collagens. Forms a complex (via covalent bonds) with ACAN; the interaction increases in abundance with increasing age of the organism via an increase in occupancy of MATN1 binding sites. Interacts with COMP. Post-translationally, N-glycosylated; reduces binding affinity for type 2 collagens.

The protein localises to the secreted. The protein resides in the extracellular space. It localises to the extracellular matrix. Its function is as follows. A major component of the extracellular matrix of non-articular cartilage. Binds to type 2 collagens and forms long concatenated protein networks as part of the extracellular matrix. Required for the network-like organization and bundling of collagen fibrils surrounding chondrocytes in the zones of maturation and hypertrophy. Required for mechanotransduction and adaption to mechanical loading in cartilage chondrocytes, resulting in an increase in expression of the extracellular matrix components ACAN and COL2A1. Acts as a moderator of angiogenesis in response to injury. The chain is Matrilin-1 from Homo sapiens (Human).